A 296-amino-acid polypeptide reads, in one-letter code: Nitrogenase iron protein (296 aa).

11-18 contributes to the ATP binding site; it reads GKGGIGKS. Cys99 lines the [4Fe-4S] cluster pocket. ADP-ribosylarginine; by dinitrogenase reductase ADP-ribosyltransferase is present on Arg102. Cys133 is a [4Fe-4S] cluster binding site.

It belongs to the NifH/BchL/ChlL family. As to quaternary structure, homodimer. [4Fe-4S] cluster serves as cofactor. Post-translationally, the reversible ADP-ribosylation of Arg-102 inactivates the nitrogenase reductase and regulates nitrogenase activity.

The catalysed reaction is N2 + 8 reduced [2Fe-2S]-[ferredoxin] + 16 ATP + 16 H2O = H2 + 8 oxidized [2Fe-2S]-[ferredoxin] + 2 NH4(+) + 16 ADP + 16 phosphate + 6 H(+). Its function is as follows. The key enzymatic reactions in nitrogen fixation are catalyzed by the nitrogenase complex, which has 2 components: the iron protein and the molybdenum-iron protein. The protein is Nitrogenase iron protein (nifH1) of Sinorhizobium fredii (strain NBRC 101917 / NGR234).